We begin with the raw amino-acid sequence, 288 residues long: Acetyl-coenzyme A carboxylase carboxyl transferase subunit beta (288 aa).

The CoA carboxyltransferase N-terminal domain occupies 34-288 (LFAKCPACKH…HLVAFHGGGQ (255 aa)). Zn(2+)-binding residues include C38, C41, C56, and C59. The C4-type zinc-finger motif lies at 38 to 59 (CPACKHMIYKKDLGLAKICPTC).

Belongs to the AccD/PCCB family. As to quaternary structure, acetyl-CoA carboxylase is a heterohexamer composed of biotin carboxyl carrier protein (AccB), biotin carboxylase (AccC) and two subunits each of ACCase subunit alpha (AccA) and ACCase subunit beta (AccD). Zn(2+) serves as cofactor.

It localises to the cytoplasm. The enzyme catalyses N(6)-carboxybiotinyl-L-lysyl-[protein] + acetyl-CoA = N(6)-biotinyl-L-lysyl-[protein] + malonyl-CoA. It functions in the pathway lipid metabolism; malonyl-CoA biosynthesis; malonyl-CoA from acetyl-CoA: step 1/1. In terms of biological role, component of the acetyl coenzyme A carboxylase (ACC) complex. Biotin carboxylase (BC) catalyzes the carboxylation of biotin on its carrier protein (BCCP) and then the CO(2) group is transferred by the transcarboxylase to acetyl-CoA to form malonyl-CoA. The sequence is that of Acetyl-coenzyme A carboxylase carboxyl transferase subunit beta from Streptococcus pyogenes serotype M1.